A 477-amino-acid chain; its full sequence is Cobyric acid synthase (477 aa).

The region spanning 248–432 (GLHIACPMLS…LHGLFSGDGF (185 aa)) is the GATase cobBQ-type domain. C330 acts as the Nucleophile in catalysis. Residue H424 is part of the active site.

It belongs to the CobB/CobQ family. CobQ subfamily.

It participates in cofactor biosynthesis; adenosylcobalamin biosynthesis. Functionally, catalyzes amidations at positions B, D, E, and G on adenosylcobyrinic A,C-diamide. NH(2) groups are provided by glutamine, and one molecule of ATP is hydrogenolyzed for each amidation. The chain is Cobyric acid synthase from Paracoccus denitrificans (strain Pd 1222).